The primary structure comprises 305 residues: Homoserine O-acetyltransferase (305 aa).

Cysteine 142 acts as the Acyl-thioester intermediate in catalysis. Substrate-binding residues include lysine 163 and serine 192. Histidine 235 acts as the Proton acceptor in catalysis. Glutamate 237 is a catalytic residue. Arginine 249 is a substrate binding site.

It belongs to the MetA family.

Its subcellular location is the cytoplasm. The catalysed reaction is L-homoserine + acetyl-CoA = O-acetyl-L-homoserine + CoA. The protein operates within amino-acid biosynthesis; L-methionine biosynthesis via de novo pathway; O-acetyl-L-homoserine from L-homoserine: step 1/1. Transfers an acetyl group from acetyl-CoA to L-homoserine, forming acetyl-L-homoserine. This is Homoserine O-acetyltransferase from Hyphomonas neptunium (strain ATCC 15444).